A 716-amino-acid chain; its full sequence is Fatty acid oxidation complex subunit alpha (716 aa).

Residues 1-188 (MIYQSPTIQV…KVGAIDAVVA (188 aa)) are enoyl-CoA hydratase/isomerase. A substrate-binding site is contributed by D295. The interval 310–716 (KDIKHAAVLG…SNNGSYYPKA (407 aa)) is 3-hydroxyacyl-CoA dehydrogenase. NAD(+) contacts are provided by residues M323, D342, 399–401 (VVE), K406, and S428. H449 (for 3-hydroxyacyl-CoA dehydrogenase activity) is an active-site residue. N452 is an NAD(+) binding site. Substrate-binding residues include N499 and Y659.

The protein in the N-terminal section; belongs to the enoyl-CoA hydratase/isomerase family. In the C-terminal section; belongs to the 3-hydroxyacyl-CoA dehydrogenase family. As to quaternary structure, heterotetramer of two alpha chains (FadB) and two beta chains (FadA).

It catalyses the reaction a (3S)-3-hydroxyacyl-CoA + NAD(+) = a 3-oxoacyl-CoA + NADH + H(+). The enzyme catalyses a (3S)-3-hydroxyacyl-CoA = a (2E)-enoyl-CoA + H2O. The catalysed reaction is a 4-saturated-(3S)-3-hydroxyacyl-CoA = a (3E)-enoyl-CoA + H2O. It carries out the reaction (3S)-3-hydroxybutanoyl-CoA = (3R)-3-hydroxybutanoyl-CoA. It catalyses the reaction a (3Z)-enoyl-CoA = a 4-saturated (2E)-enoyl-CoA. The enzyme catalyses a (3E)-enoyl-CoA = a 4-saturated (2E)-enoyl-CoA. It participates in lipid metabolism; fatty acid beta-oxidation. Involved in the aerobic and anaerobic degradation of long-chain fatty acids via beta-oxidation cycle. Catalyzes the formation of 3-oxoacyl-CoA from enoyl-CoA via L-3-hydroxyacyl-CoA. It can also use D-3-hydroxyacyl-CoA and cis-3-enoyl-CoA as substrate. The protein is Fatty acid oxidation complex subunit alpha of Shewanella amazonensis (strain ATCC BAA-1098 / SB2B).